Consider the following 557-residue polypeptide: Organic cation/carnitine transporter 2 (557 aa).

Residues 1–20 (MRDYDEVTAFLGEWGPFQRL) lie on the Cytoplasmic side of the membrane. Residues 21 to 41 (IFFLLSASIIPNGFNGMSIVF) traverse the membrane as a helical segment. Residues 42 to 142 (LAGTPEHRCL…DLVCKDDWKA (101 aa)) are Extracellular-facing. N-linked (GlcNAc...) asparagine glycosylation is found at Asn57, Asn64, and Asn91. The helical transmembrane segment at 143 to 163 (PLTTSLFFVGVLMGSFISGQL) threads the bilayer. Over 164–172 (SDRFGRKNV) the chain is Cytoplasmic. The chain crosses the membrane as a helical span at residues 173–193 (LFLTMGMQTGFSFLQVFSVNF). The Extracellular portion of the chain corresponds to 194–197 (EMFT). The helical transmembrane segment at 198 to 218 (VLFVLVGMGQISNYVAAFVLG) threads the bilayer. 218-225 (GTEILSKS) provides a ligand contact to ATP. Topologically, residues 219 to 232 (TEILSKSIRIIFAT) are cytoplasmic. A helical membrane pass occupies residues 233 to 253 (LGVCIFYAFGFMVLPLFAYFI). The Extracellular portion of the chain corresponds to 254–257 (RDWR). Residues 258-278 (MLLLALTVPGVLCGALWWFIP) traverse the membrane as a helical segment. Topologically, residues 279-341 (ESPRWLISQG…YDLIRTRNIR (63 aa)) are cytoplasmic. Residues 342-362 (VITIMSIILWLTISVGYFGLS) traverse the membrane as a helical segment. At 363–373 (LDTPNLHGDIY) the chain is on the extracellular side. Residues 374 to 394 (VNCFLLAAVEVPAYVLAWLLL) traverse the membrane as a helical segment. At 395–406 (QYLPRRYSISAA) the chain is on the cytoplasmic side. A helical membrane pass occupies residues 407-427 (LFLGGSVLLFMQLVPSELFYL). Residues 428 to 430 (STA) are Extracellular-facing. Residues 431–451 (LVMVGKFGITSAYSMVYVYTA) traverse the membrane as a helical segment. Residues 452–462 (ELYPTVVRNMG) are Cytoplasmic-facing. The chain crosses the membrane as a helical span at residues 463–483 (VGVSSTASRLGSILSPYFVYL). Residues 484–488 (GAYDR) lie on the Extracellular side of the membrane. At Tyr486 the chain carries Phosphotyrosine. The chain crosses the membrane as a helical span at residues 489-509 (FLPYILMGSLTILTAILTLFF). The Cytoplasmic portion of the chain corresponds to 510 to 557 (PESFGVPLPDTIDQMLRVKGIKQWQIQSQTRMQKDGEESPTVLKSTAF). At Ser548 the chain carries Phosphoserine. Phosphothreonine is present on Thr550.

It belongs to the major facilitator (TC 2.A.1) superfamily. Organic cation transporter (TC 2.A.1.19) family. Interacts with PDZK1. As to expression, widely expressed. Expressed in kidney, liver and testis. Expressed at the brush border of the small, large intestine and colon (at protein level).

It is found in the apical cell membrane. Its subcellular location is the basal cell membrane. It localises to the cell membrane. The enzyme catalyses (R)-carnitine(out) + Na(+)(out) = (R)-carnitine(in) + Na(+)(in). The catalysed reaction is glycine betaine(out) + Na(+)(out) = glycine betaine(in) + Na(+)(in). It carries out the reaction glycine betaine(out) + (R)-carnitine(in) = glycine betaine(in) + (R)-carnitine(out). It catalyses the reaction O-butanoyl-(R)-carnitine(out) + Na(+)(out) = O-butanoyl-(R)-carnitine(in) + Na(+)(in). The enzyme catalyses O-acetyl-(R)-carnitine(out) + Na(+)(out) = O-acetyl-(R)-carnitine(in) + Na(+)(in). The catalysed reaction is O-propanoyl-(R)-carnitine(out) + Na(+)(out) = O-propanoyl-(R)-carnitine(in) + Na(+)(in). It carries out the reaction (S)-carnitine(out) + Na(+)(out) = (S)-carnitine(in) + Na(+)(in). It catalyses the reaction an O-acyl-(R)-carnitine(out) + Na(+)(out) = an O-acyl-(R)-carnitine(in) + Na(+)(in). The enzyme catalyses L-glutamyl-L-arginyl-glycyl-L-methionyl-L-threonine(out) + Na(+)(out) = L-glutamyl-L-arginyl-glycyl-L-methionyl-L-threonine(in) + Na(+)(in). The catalysed reaction is N,N-dimethylglycine(out) + Na(+)(out) = N,N-dimethylglycine(in) + Na(+)(in). With respect to regulation, inhibited by emetine, quinidine and verapamil. The IC(50) of emetine is 4.2 uM. Not inhibited by valproic acid. Transport of (R)-carnitine is stimulated by cholesterol in the plasma membrane. Functionally, sodium-ion dependent, high affinity carnitine transporter. Involved in the active cellular uptake of carnitine. Transports one sodium ion with one molecule of carnitine. Also transports organic cations such as tetraethylammonium (TEA) without the involvement of sodium. Also relative uptake activity ratio of carnitine to TEA is 11.3. May also contribute to regulate the transport of organic compounds in testis across the blood-testis-barrier. The chain is Organic cation/carnitine transporter 2 from Mus musculus (Mouse).